The following is a 375-amino-acid chain: Queuine tRNA-ribosyltransferase (375 aa).

D90 (proton acceptor) is an active-site residue. Residues D90–F94, D144, Q190, and G217 contribute to the substrate site. The segment at G248–Y254 is RNA binding. The active-site Nucleophile is D267. Positions A272–R276 are RNA binding; important for wobble base 34 recognition. Positions 305, 307, 310, and 336 each coordinate Zn(2+).

Belongs to the queuine tRNA-ribosyltransferase family. As to quaternary structure, homodimer. Within each dimer, one monomer is responsible for RNA recognition and catalysis, while the other monomer binds to the replacement base PreQ1. It depends on Zn(2+) as a cofactor.

The catalysed reaction is 7-aminomethyl-7-carbaguanine + guanosine(34) in tRNA = 7-aminomethyl-7-carbaguanosine(34) in tRNA + guanine. The protein operates within tRNA modification; tRNA-queuosine biosynthesis. Catalyzes the base-exchange of a guanine (G) residue with the queuine precursor 7-aminomethyl-7-deazaguanine (PreQ1) at position 34 (anticodon wobble position) in tRNAs with GU(N) anticodons (tRNA-Asp, -Asn, -His and -Tyr). Catalysis occurs through a double-displacement mechanism. The nucleophile active site attacks the C1' of nucleotide 34 to detach the guanine base from the RNA, forming a covalent enzyme-RNA intermediate. The proton acceptor active site deprotonates the incoming PreQ1, allowing a nucleophilic attack on the C1' of the ribose to form the product. After dissociation, two additional enzymatic reactions on the tRNA convert PreQ1 to queuine (Q), resulting in the hypermodified nucleoside queuosine (7-(((4,5-cis-dihydroxy-2-cyclopenten-1-yl)amino)methyl)-7-deazaguanosine). In Borreliella burgdorferi (strain ATCC 35210 / DSM 4680 / CIP 102532 / B31) (Borrelia burgdorferi), this protein is Queuine tRNA-ribosyltransferase.